Reading from the N-terminus, the 439-residue chain is CBL-interacting serine/threonine-protein kinase 20 (439 aa).

The region spanning 12–266 is the Protein kinase domain; the sequence is YELGRLLGQG…IEKIMENSWF (255 aa). ATP contacts are provided by residues 18–26 and K41; that span reads LGQGTFAKV. D134 serves as the catalytic Proton acceptor. An activation loop region spans residues 152–181; it reads DFGLSALRESKQQDGLLHTTCGTPAYVAPE. S156 is modified (phosphoserine). The residue at position 170 (T170) is a Phosphothreonine. One can recognise an NAF domain in the interval 297-322; the sequence is VKPMSYNAFDLISSLSQGFDLSGLFE. Residues 326-356 form a PPI region; it reads RSESKFTTKKDAKEIVSKFEEIATSSERFNL.

The protein belongs to the protein kinase superfamily. CAMK Ser/Thr protein kinase family. SNF1 subfamily. It depends on Mn(2+) as a cofactor. In terms of processing, autophosphorylated. Confined to mature leaves.

The catalysed reaction is L-seryl-[protein] + ATP = O-phospho-L-seryl-[protein] + ADP + H(+). The enzyme catalyses L-threonyl-[protein] + ATP = O-phospho-L-threonyl-[protein] + ADP + H(+). Functionally, CIPK serine-threonine protein kinases interact with CBL proteins. Binding of a CBL protein to the regulatory NAF domain of CIPK protein lead to the activation of the kinase in a calcium-dependent manner. Required for the abscisic acid-mediated (ABA) signaling pathway involved in seed germination and growth elongation inhibition. This chain is CBL-interacting serine/threonine-protein kinase 20 (CIPK20), found in Arabidopsis thaliana (Mouse-ear cress).